The sequence spans 227 residues: Flagellar L-ring protein 2 (227 aa).

Positions 1–17 (MKSKLAITMVSALLLAA) are cleaved as a signal peptide. The N-palmitoyl cysteine moiety is linked to residue C18. C18 is lipidated: S-diacylglycerol cysteine.

Belongs to the FlgH family. The basal body constitutes a major portion of the flagellar organelle and consists of four rings (L,P,S, and M) mounted on a central rod.

The protein localises to the cell outer membrane. It is found in the bacterial flagellum basal body. In terms of biological role, assembles around the rod to form the L-ring and probably protects the motor/basal body from shearing forces during rotation. The protein is Flagellar L-ring protein 2 of Chromobacterium violaceum (strain ATCC 12472 / DSM 30191 / JCM 1249 / CCUG 213 / NBRC 12614 / NCIMB 9131 / NCTC 9757 / MK).